A 270-amino-acid chain; its full sequence is Shikimate dehydrogenase (NADP(+)) (270 aa).

Residues 14-16 (SKS) and T60 each bind shikimate. K64 acts as the Proton acceptor in catalysis. Position 76 (E76) interacts with NADP(+). Positions 85 and 101 each coordinate shikimate. Residues 125–129 (GAGGA), 149–154 (NRTASR), and M213 each bind NADP(+). Shikimate is bound at residue Y215. G236 contacts NADP(+).

This sequence belongs to the shikimate dehydrogenase family. In terms of assembly, homodimer.

It carries out the reaction shikimate + NADP(+) = 3-dehydroshikimate + NADPH + H(+). The protein operates within metabolic intermediate biosynthesis; chorismate biosynthesis; chorismate from D-erythrose 4-phosphate and phosphoenolpyruvate: step 4/7. In terms of biological role, involved in the biosynthesis of the chorismate, which leads to the biosynthesis of aromatic amino acids. Catalyzes the reversible NADPH linked reduction of 3-dehydroshikimate (DHSA) to yield shikimate (SA). The protein is Shikimate dehydrogenase (NADP(+)) of Stutzerimonas stutzeri (strain A1501) (Pseudomonas stutzeri).